The following is a 461-amino-acid chain: Bifunctional protein HldE (461 aa).

The interval 1 to 312 (MLEFLSQQKP…IRSFKSMSFE (312 aa)) is ribokinase. ATP is bound at residue 191–194 (NKKE). Asp-259 is an active-site residue. Positions 334–461 (FTNGCFDIVH…KIIEKIKDKK (128 aa)) are cytidylyltransferase.

It in the N-terminal section; belongs to the carbohydrate kinase PfkB family. This sequence in the C-terminal section; belongs to the cytidylyltransferase family. In terms of assembly, homodimer.

The catalysed reaction is D-glycero-beta-D-manno-heptose 7-phosphate + ATP = D-glycero-beta-D-manno-heptose 1,7-bisphosphate + ADP + H(+). It catalyses the reaction D-glycero-beta-D-manno-heptose 1-phosphate + ATP + H(+) = ADP-D-glycero-beta-D-manno-heptose + diphosphate. The protein operates within nucleotide-sugar biosynthesis; ADP-L-glycero-beta-D-manno-heptose biosynthesis; ADP-L-glycero-beta-D-manno-heptose from D-glycero-beta-D-manno-heptose 7-phosphate: step 1/4. It functions in the pathway nucleotide-sugar biosynthesis; ADP-L-glycero-beta-D-manno-heptose biosynthesis; ADP-L-glycero-beta-D-manno-heptose from D-glycero-beta-D-manno-heptose 7-phosphate: step 3/4. Its function is as follows. Catalyzes the phosphorylation of D-glycero-D-manno-heptose 7-phosphate at the C-1 position to selectively form D-glycero-beta-D-manno-heptose-1,7-bisphosphate. Catalyzes the ADP transfer from ATP to D-glycero-beta-D-manno-heptose 1-phosphate, yielding ADP-D-glycero-beta-D-manno-heptose. This Campylobacter jejuni (strain RM1221) protein is Bifunctional protein HldE.